A 286-amino-acid polypeptide reads, in one-letter code: MGAPKQRWTSEEEAALRAGVARHGVGNWRMILNDPELSSTLRYRSNVDLKDKWRNMNVIVTSSSTRDRGRTSTRRTRAAPKNNDQLLAMSTITSEVDDEIVDVKPIVSMSVEGWNTSNSKKSHSRLDNIIMEAIKNLNEPTGSHRTTIANYIEEQYWPPSDFDHLLSAKLKYLATSGKLLKVNRKYRIAPSLLEDVQREPLKLGSDASRTLTRSQVDAELVRMATMTVEAAAAAAAHAVAEAEAIMAEAEAAAREAEAAEAEARAAQAFAEAAVLTLKNRNAAKLV.

The 61-residue stretch at 1–61 folds into the HTH myb-type domain; that stretch reads MGAPKQRWTS…KWRNMNVIVT (61 aa). The H-T-H motif DNA-binding region spans 28–57; that stretch reads WRMILNDPELSSTLRYRSNVDLKDKWRNMN. Residues 122 to 190 enclose the H15 domain; the sequence is SHSRLDNIIM…KVNRKYRIAP (69 aa). Residues 229–277 adopt a coiled-coil conformation; it reads EAAAAAAAHAVAEAEAIMAEAEAAAREAEAAEAEARAAQAFAEAAVLTL.

The protein belongs to the histone H1/H5 family. SMH subfamily. As to quaternary structure, forms a homodimer and heterodimers.

It is found in the nucleus. Its subcellular location is the chromosome. The protein resides in the nucleolus. It localises to the telomere. Its function is as follows. Binds preferentially double-stranded telomeric repeats, but may also bind to the single telomeric strand. The polypeptide is Single myb histone 5 (SMH5) (Zea mays (Maize)).